A 366-amino-acid chain; its full sequence is Histidinol-phosphate aminotransferase 1 (366 aa).

Lys226 carries the post-translational modification N6-(pyridoxal phosphate)lysine.

The protein belongs to the class-II pyridoxal-phosphate-dependent aminotransferase family. Histidinol-phosphate aminotransferase subfamily. Homodimer. Pyridoxal 5'-phosphate serves as cofactor.

The catalysed reaction is L-histidinol phosphate + 2-oxoglutarate = 3-(imidazol-4-yl)-2-oxopropyl phosphate + L-glutamate. It participates in amino-acid biosynthesis; L-histidine biosynthesis; L-histidine from 5-phospho-alpha-D-ribose 1-diphosphate: step 7/9. The chain is Histidinol-phosphate aminotransferase 1 from Mannheimia succiniciproducens (strain KCTC 0769BP / MBEL55E).